The following is a 115-amino-acid chain: uncharacterized protein (115 aa).

To M.tuberculosis Rv3073c.

This is an uncharacterized protein from Escherichia coli (strain K12).